A 293-amino-acid chain; its full sequence is Kynurenine formamidase (293 aa).

An HGGXW motif is present at residues 84–88 (HGGYW). Residue serine 153 is the Nucleophile of the active site. Catalysis depends on residues aspartate 236 and histidine 268.

Belongs to the kynurenine formamidase family. Homodimer.

Its subcellular location is the cytoplasm. It localises to the cytosol. The protein localises to the nucleus. The enzyme catalyses N-formyl-L-kynurenine + H2O = L-kynurenine + formate + H(+). The protein operates within amino-acid degradation; L-tryptophan degradation via kynurenine pathway; L-kynurenine from L-tryptophan: step 2/2. Catalyzes the hydrolysis of N-formyl-L-kynurenine to L-kynurenine, the second step in the kynurenine pathway of tryptophan degradation. Kynurenine may be further oxidized to nicotinic acid, NAD(H) and NADP(H). Required for elimination of toxic metabolites. This Danio rerio (Zebrafish) protein is Kynurenine formamidase (afmid).